The chain runs to 311 residues: AT-hook motif nuclear-localized protein 27 (311 aa).

Residues 40–105 (HHHQHQQHQQ…KNKAKPPIIV (66 aa)) form a disordered region. Basic and acidic residues predominate over residues 55–75 (DDSRESDHSNKDHHQQGRPDS). Positions 86-98 (KRPRGRPPGSKNK) form a DNA-binding region, a.T hook. The region spanning 110-258 (PNALRSHVLE…EEGGGGGGGG (149 aa)) is the PPC domain. A required for the binding to non-AHL interactors region spans residues 178 to 183 (GRFEIL). Positions 246–311 (EEEEEGGGGG…GAGTPSRPPF (66 aa)) are disordered. The segment covering 252–262 (GGGGGGGGGGP) has biased composition (gly residues). A compositionally biased stretch (low complexity) spans 263–277 (PQMQQAPSASPPSGV). Positions 278 to 292 (TGQGQLGGNVGGYGF) are enriched in gly residues.

Homodimer. Interacts with AHL12, AHL25, AHL29, TCP4, TCP13, EF114, ATAF2/NAC081, histone H2B.1, histone H3.3 and histone H4. In terms of tissue distribution, expressed in the hypocotyl and the vascular tissue of seedling.

It is found in the nucleus. Its function is as follows. Transcription factor that specifically binds AT-rich DNA sequences related to the nuclear matrix attachment regions (MARs). Negatively regulates plant innate immunity (PTI) to pathogens through the down-regulation of the PAMP-triggered FRK1 expression. Acts redundantly with AHL18, AHL22 and AHL29 in the regulation of flowering and regulation of the hypocotyl elongation. Acts as a chromatin remodeling factor that negatively regulates the leaf senescence. Acts redundantly with AHL29/SOB3 to modulate hypocotyl growth inhibition in response to light. The sequence is that of AT-hook motif nuclear-localized protein 27 from Arabidopsis thaliana (Mouse-ear cress).